Reading from the N-terminus, the 204-residue chain is Large ribosomal subunit protein mL67 (204 aa).

Belongs to the mitochondrion-specific ribosomal protein mL67 family.

The protein resides in the nucleus. It is found in the mitochondrion. Functionally, transcription factor involved in regulation of RNA polymerase II-dependent transcription. Also involved in regulation of mitochondrial DNA recombination, maintenance and repair, and generation of homoplasmic cells. In Yarrowia lipolytica (strain CLIB 122 / E 150) (Yeast), this protein is Large ribosomal subunit protein mL67 (MHR1).